Reading from the N-terminus, the 224-residue chain is Phosphoglycolate phosphatase (224 aa).

Asp8 serves as the catalytic Nucleophile. Mg(2+) is bound by residues Asp8 and Asp10. Lys151 is a substrate binding site. Asp174 and Asp178 together coordinate Mg(2+).

The protein belongs to the archaeal SPP-like hydrolase family. Requires Mg(2+) as cofactor.

The enzyme catalyses 2-phosphoglycolate + H2O = glycolate + phosphate. Functionally, catalyzes the dephosphorylation of 2-phosphoglycolate. The sequence is that of Phosphoglycolate phosphatase from Thermoplasma volcanium (strain ATCC 51530 / DSM 4299 / JCM 9571 / NBRC 15438 / GSS1).